We begin with the raw amino-acid sequence, 335 residues long: MKTQIINGVSLPNIPWQDKPADCKDVIWRYDANPIIPRDQLPTSNSIFNSAVVPYESEKGKFAGVFRVDDKCRNMELHAGFSKDGIHWDINPDRIVFEQAEKSTEEVNQWGYGYDPRVCFIEDRFWVTWCNAYGWKPTIGVAYTFDFKTFYQCENAFLPFNRNGVLFPRKINGKYVMFSRPSDSGHTPFGDMFISQSPDMKYWGEHRHVMGPLRAWESKKIGAGPIPIETSEGWLCFYHGVLESCNGFVYSFSACILDKDEPWKVKYRCAEYLLSPQKIYECVGDVQNVTFPCATLVDADTGRIAIYYGCADTCVSMAFTTVDDVVDYVKSHSSV.

The protein belongs to the glycosyl hydrolase 130 family. In terms of assembly, homohexamer in solution.

It catalyses the reaction [(1-&gt;4)-beta-D-mannosyl](n) + phosphate = [(1-&gt;4)-beta-D-mannosyl](n-1) + alpha-D-mannose 1-phosphate. Catalyzes the phosphorolysis of beta-1,4-mannooligosaccharides to mannose 1-phosphate (Man1P) and shorter mannooligosaccharides. Can also catalyze the phosphorolysis of 4-O-beta-D-mannopyranosyl-D-glucopyranose (Man-Glc), but shows higher activity toward longer mannooligosaccharides. Involved in a mannan catabolic pathway which feeds into glycolysis. In Ruminococcus albus (strain ATCC 27210 / DSM 20455 / JCM 14654 / NCDO 2250 / 7), this protein is Beta-1,4-mannooligosaccharide phosphorylase.